Consider the following 1701-residue polypeptide: DDB1- and CUL4-associated factor homolog 1 (1701 aa).

Residues histidine 224–glycine 245 are compositionally biased toward polar residues. Disordered stretches follow at residues histidine 224–glutamate 269, aspartate 883–phenylalanine 906, and arginine 932–leucine 961. A LisH domain is found at asparagine 851–aspartate 883. The segment covering arginine 888–phenylalanine 906 has biased composition (polar residues). 4 WD repeats span residues aspartate 1086–histidine 1125, cysteine 1128–histidine 1169, tyrosine 1171–leucine 1210, and glycine 1215–aspartate 1252. 2 short sequence motifs (DWD box) span residues leucine 1237–asparagine 1245 and glutamate 1275–phenylalanine 1282. 3 disordered regions span residues isoleucine 1384 to leucine 1559, glutamate 1566 to proline 1585, and leucine 1641 to alanine 1701. Acidic residues-rich tracts occupy residues asparagine 1390–isoleucine 1423 and aspartate 1451–phenylalanine 1461. The segment covering isoleucine 1468–arginine 1479 has biased composition (basic residues). 2 stretches are compositionally biased toward acidic residues: residues glutamate 1494–phenylalanine 1512 and aspartate 1520–serine 1543. Residues alanine 1567 to arginine 1581 are compositionally biased toward basic and acidic residues. A compositionally biased stretch (acidic residues) spans aspartate 1667–isoleucine 1678.

It belongs to the VPRBP/DCAF1 family. As to quaternary structure, component of the cul4-rbx1-ddb1-dcaf1 E3 ubiquitin-protein ligase complex.

It localises to the nucleus. The protein operates within protein modification; protein ubiquitination. Functionally, component of the cul4-rbx1-ddb1-dcaf1 E3 ubiquitin-protein ligase complex, dcaf1 may function as the substrate recognition module within this complex. In Caenorhabditis elegans, this protein is DDB1- and CUL4-associated factor homolog 1 (dcaf-1).